A 238-amino-acid chain; its full sequence is MDYAMKSLSLLYPRSLSRHVAVSTAVVTQQLVSEPSRETPRARPCRVSTADRKVRKGIMAHSLEDLLGKVQDILKLKDKPFSLVLEEDGTIVETEEYFQALPRDTVFMVLQKGQKWKSPSEQRKKKAQLSLSQKPTKKIDVARVTFDLYKLNPQDFIGCLNVKATLYDTYSLSYDLHCYRAKRIVKEMLRWTLFSMQATGHMLLGTSSYMQQFLDATEEEQPSKAKASLLPACLKMLQ.

The required for liquid-liquid phase separation (LLPS) stretch occupies residues 1–35 (MDYAMKSLSLLYPRSLSRHVAVSTAVVTQQLVSEP). Positions 41–118 (RARPCRVSTA…VLQKGQKWKS (78 aa)) constitute a CIDE-N domain.

The protein belongs to the CIDE family. As to quaternary structure, homodimer. Interacts with CIDEA. Homooligomer; undergoes liquid-liquid phase separation (LLPS) via its N-terminus, facilitating lipid droplet fusion, occurs at the lipid droplet contact sites. Interacts with PLIN1. Interacts with NFAT5; this interaction is direct and retains NFAT5 in the cytoplasm. Interacts with CEBPB. Interacts with isoform CLSTN3beta of CLSTN3; inhibiting the lipid transferase activity of CIDEC. Ubiquitinated and targeted to proteasomal degradation, resulting in a short half-life (about 15 minutes in 3T3-L1 cells). Protein stability depends on triaclyglycerol synthesis, fatty acid availability and lipid droplet formation.

The protein localises to the lipid droplet. It localises to the endoplasmic reticulum. Its subcellular location is the nucleus. The catalysed reaction is a triacyl-sn-glycerol(in) = a triacyl-sn-glycerol(out). Functionally, lipid transferase specifically expressed in white adipose tissue, which promotes unilocular lipid droplet formation by mediating lipid droplet fusion. Lipid droplet fusion promotes their enlargement, restricting lipolysis and favoring lipid storage. Localizes on the lipid droplet surface, at focal contact sites between lipid droplets, and mediates atypical lipid droplet fusion by undergoing liquid-liquid phase separation (LLPS) and promoting directional net neutral lipid transfer from the smaller to larger lipid droplets. The transfer direction may be driven by the internal pressure difference between the contacting lipid droplet pair. Its role in neutral lipid transfer and lipid droplet enlargement is activated by the interaction with PLIN1. May also act as a CEBPB coactivator in the white adipose tissue to control the expression of a subset of CEBPB downstream target genes, including SOCS1, SOCS3, TGFB1, TGFBR1, ID2 and XDH. When overexpressed in preadipocytes, induces apoptosis or increases cell susceptibility to apoptosis induced by serum deprivation or TGFB treatment. The sequence is that of Lipid transferase CIDEC from Rattus norvegicus (Rat).